The primary structure comprises 309 residues: Ribosomal RNA large subunit methyltransferase F (309 aa).

This sequence belongs to the methyltransferase superfamily. METTL16/RlmF family.

Its subcellular location is the cytoplasm. It carries out the reaction adenosine(1618) in 23S rRNA + S-adenosyl-L-methionine = N(6)-methyladenosine(1618) in 23S rRNA + S-adenosyl-L-homocysteine + H(+). In terms of biological role, specifically methylates the adenine in position 1618 of 23S rRNA. The sequence is that of Ribosomal RNA large subunit methyltransferase F from Cronobacter sakazakii (strain ATCC BAA-894) (Enterobacter sakazakii).